The sequence spans 400 residues: uncharacterized protein (400 aa).

The protein to M.jannaschii MJ1544 and MJ1637.

This is an uncharacterized protein from Haemophilus influenzae (strain ATCC 51907 / DSM 11121 / KW20 / Rd).